The primary structure comprises 860 residues: Protein argonaute-2 (860 aa).

Residue Tyr2 is modified to 3'-nitrotyrosine. The region spanning 230-349 (PVIEFVCEVL…LPLEVCNIVA (120 aa)) is the PAZ domain. The interaction with guide RNA stretch occupies residues 312–317 (YFKDRH). Ser388 is modified (phosphoserine). In terms of domain architecture, Piwi spans 518-819 (LVVVILPGKT…VAFRARYHLV (302 aa)). The tract at residues 525 to 567 (GKTPVYAEVKRVGDTVLGMATQCVQMKNVQRTTPQTLSNLCLK) is interaction with guide RNA. The tract at residues 588–591 (FQQP) is interaction with GW182 family members. An a divalent metal cation-binding site is contributed by Asp598. The segment at 651 to 661 (LIQFYKSTRFK) is interaction with GW182 family members. Residue Asp670 coordinates a divalent metal cation. Pro701 is subject to 4-hydroxyproline. 3 interaction with guide RNA regions span residues 710–711 (KR), 754–762 (HAGIQGTSR), and 791–813 (YVRC…VAFR). His808 lines the a divalent metal cation pocket. A phosphoserine mark is found at Ser825, Ser829, Ser832, and Ser835.

Belongs to the argonaute family. Ago subfamily. As to quaternary structure, interacts with DICER1 through its Piwi domain and with TARBP2 during assembly of the RNA-induced silencing complex (RISC). Together, DICER1, AGO2 and TARBP2 constitute the trimeric RISC loading complex (RLC), or micro-RNA (miRNA) loading complex (miRLC). Within the RLC/miRLC, DICER1 and TARBP2 are required to process precursor miRNAs (pre-miRNAs) to mature miRNAs and then load them onto AGO2. AGO2 bound to the mature miRNA constitutes the minimal RISC and may subsequently dissociate from DICER1 and TARBP2. Note however that the term RISC has also been used to describe the trimeric RLC/miRLC. The formation of RISC complexes containing siRNAs rather than miRNAs appears to occur independently of DICER1. Interacts with AGO1. Also interacts with DDB1, DDX5, DDX6, DDX20, DHX30, DHX36, DDX47, DHX9, ELAVL, FXR1, GEMIN4, HNRNPF, IGF2BP1, ILF3, IMP8, MATR3, PABPC1, PRMT5, P4HA1, P4HB, RBM4, SART3, TNRC6A, TNRC6B, UPF1 and YBX1. Interacts with the P-body components DCP1A and XRN1. Associates with polysomes and messenger ribonucleoproteins (mNRPs). Interacts with RBM4; the interaction is modulated under stress-induced conditions, occurs under both cell proliferation and differentiation conditions and in an RNA- and phosphorylation-independent manner. Interacts with LIMD1, WTIP and AJUBA. Interacts with TRIM71. Interacts with APOBEC3G in an RNA-dependent manner. Interacts with APOBEC3A, APOBEC3C, APOBEC3F and APOBEC3H. Interacts with DICER1, TARBP2, EIF6, MOV10 and RPL7A (60S ribosome subunit); they form a large RNA-induced silencing complex (RISC). Interacts with FMR1. Interacts with ZFP36. Interacts with RC3H1; the interaction is RNA independent. Interacts with ARB2A. Found in a complex composed of AGO2, CHD7 and ARB2A. Interacts with SND1 and SYT11. Interacts with CLNK. Interacts with GARRE1. Interacts with GRB2; this interaction is important for the formation of a ternary complex containing GRB2, AGO2 and DICER1. Mg(2+) is required as a cofactor. Requires Mn(2+) as cofactor. In terms of processing, hydroxylated. 4-hydroxylation appears to enhance protein stability but is not required for miRNA-binding or endonuclease activity. Ubiquitinated on surface-exposed lysines by a SCF-like E3 ubiquitin-protein ligase complex containing ZSWIM8 during target-directed microRNA degradation (TDMD), a process that mediates degradation of microRNAs (miRNAs). Ubiquitination by the SCF-like E3 ubiquitin-protein ligase complex containing ZSWIM8 leads to its subsequent degradation, thereby exposing miRNAs for degradation. ZSWIM8 recognizes and binds AGO2 when it is engaged with a TDMD target. Post-translationally, phosphorylation at Ser-388 by AKT3; leads to up-regulate translational repression of microRNA target and down-regulate endonucleolytic cleavage. In terms of processing, a phosphorylation cycle of C-terminal serine cluster (Ser-825-Ser-835) regulates the release of target mRNAs. Target-binding leads to phosphorylation of these residues by CSNK1A1, which reduces the affinity of AGO2 for mRNA and enables target release. The ANKRD52-PPP6C phosphatase complex dephosphorylates the residues, which primes AGO2 for binding a new target. As to expression, ubiquitous expression in 9.5 day embryos with highest levels in forebrain, heart, limb buds, and branchial arches.

It localises to the cytoplasm. The protein localises to the P-body. The protein resides in the nucleus. It carries out the reaction Endonucleolytic cleavage to 5'-phosphomonoester.. Required for RNA-mediated gene silencing (RNAi) by the RNA-induced silencing complex (RISC). The 'minimal RISC' appears to include AGO2 bound to a short guide RNA such as a microRNA (miRNA) or short interfering RNA (siRNA). These guide RNAs direct RISC to complementary mRNAs that are targets for RISC-mediated gene silencing. The precise mechanism of gene silencing depends on the degree of complementarity between the miRNA or siRNA and its target. Binding of RISC to a perfectly complementary mRNA generally results in silencing due to endonucleolytic cleavage of the mRNA specifically by AGO2. Binding of RISC to a partially complementary mRNA results in silencing through inhibition of translation, and this is independent of endonuclease activity. May inhibit translation initiation by binding to the 7-methylguanosine cap, thereby preventing the recruitment of the translation initiation factor eIF4-E. May also inhibit translation initiation via interaction with EIF6, which itself binds to the 60S ribosomal subunit and prevents its association with the 40S ribosomal subunit. The inhibition of translational initiation leads to the accumulation of the affected mRNA in cytoplasmic processing bodies (P-bodies), where mRNA degradation may subsequently occur. In some cases RISC-mediated translational repression is also observed for miRNAs that perfectly match the 3' untranslated region (3'-UTR). Can also up-regulate the translation of specific mRNAs under certain growth conditions. Binds to the AU element of the 3'-UTR of the TNF (TNF-alpha) mRNA and up-regulates translation under conditions of serum starvation. Also required for transcriptional gene silencing (TGS), in which short RNAs known as antigene RNAs or agRNAs direct the transcriptional repression of complementary promoter regions. Regulates lymphoid and erythroid development and function, and this is independent of endonuclease activity. This is Protein argonaute-2 (Ago2) from Mus musculus (Mouse).